Consider the following 89-residue polypeptide: Small ribosomal subunit protein uS15 (89 aa).

The protein belongs to the universal ribosomal protein uS15 family. In terms of assembly, part of the 30S ribosomal subunit. Forms a bridge to the 50S subunit in the 70S ribosome, contacting the 23S rRNA.

In terms of biological role, one of the primary rRNA binding proteins, it binds directly to 16S rRNA where it helps nucleate assembly of the platform of the 30S subunit by binding and bridging several RNA helices of the 16S rRNA. Functionally, forms an intersubunit bridge (bridge B4) with the 23S rRNA of the 50S subunit in the ribosome. This chain is Small ribosomal subunit protein uS15, found in Pseudomonas putida (strain GB-1).